Consider the following 213-residue polypeptide: Adenylate kinase (213 aa).

Residue 14 to 19 participates in ATP binding; sequence GSGKGT. Residues 34-63 are NMP; that stretch reads SSGELFRSAIDSASPLGIKAAEYINQGLLV. AMP contacts are provided by residues Ser-35, Arg-40, 61 to 63, 89 to 92, and Gln-96; these read LLV and GFPR. An LID region spans residues 129 to 162; sequence SRFICPSCKHVYNQNQGLSECPTCQMKLVRRSDD. Arg-130 is a binding site for ATP. Zn(2+) contacts are provided by Cys-133 and Cys-136. ATP is bound at residue 139–140; it reads VY. Positions 149 and 152 each coordinate Zn(2+). AMP-binding residues include Arg-159 and Arg-170. Residue Ala-198 coordinates ATP.

Belongs to the adenylate kinase family. As to quaternary structure, monomer.

It localises to the cytoplasm. The catalysed reaction is AMP + ATP = 2 ADP. It participates in purine metabolism; AMP biosynthesis via salvage pathway; AMP from ADP: step 1/1. Functionally, catalyzes the reversible transfer of the terminal phosphate group between ATP and AMP. Plays an important role in cellular energy homeostasis and in adenine nucleotide metabolism. The polypeptide is Adenylate kinase (Chlamydia abortus (strain DSM 27085 / S26/3) (Chlamydophila abortus)).